The chain runs to 5209 residues: E3 ubiquitin-protein ligase rnf213-alpha (5209 aa).

2 stretches are compositionally biased toward polar residues: residues 27–52 (SQSYETTQGTPHDKSQTPSIVPQITN) and 61–72 (ESKSLEIQNANV). A disordered region spans residues 27 to 373 (SQSYETTQGT…KRNTRSTQHI (347 aa)). Over residues 85-101 (PKKKKRKKRKKEKKKKS) the composition is skewed to basic residues. A compositionally biased stretch (low complexity) spans 108 to 118 (SSLTSDLSDIS). Over residues 119 to 128 (LTDKEKKMDT) the composition is skewed to basic and acidic residues. Polar residues-rich tracts occupy residues 167–177 (LSASALTTGSS) and 184–195 (IGTTQKPVSASA). Over residues 205-218 (QTKEEKVKCKDEGQ) the composition is skewed to basic and acidic residues. Over residues 219 to 243 (KSLSAKAQHTPNANVDQNANVQSDA) the composition is skewed to polar residues. A compositionally biased stretch (low complexity) spans 256 to 269 (KSSSVKTKPSKSTV). Basic and acidic residues-rich tracts occupy residues 271 to 288 (DPKKTESEKQKSGERDNE) and 330 to 352 (MKVEKKPAGGKKDSSADQKSKES). ATP is bound by residues 2036 to 2041 (GVGKSL), Glu-2135, Asp-2193, Arg-2252, Lys-2535, and Ser-2610. Residues Cys-4005, Cys-4008, Cys-4020, His-4022, Cys-4025, Cys-4028, Cys-4040, Cys-4043, Cys-4507, and His-4511 each coordinate Zn(2+). An RING-type zinc finger spans residues 4005-4043 (CPVCMGDPRDPLSLPCDHIYCLTCIRQWLVPGQMHCPLC). The RZ-type zinc finger occupies 4487–4557 (MPDDMLAVAQ…MQIQADRTQS (71 aa)). Cys-4518 serves as the catalytic Nucleophile; for E3 ubiquitin-lipopolysaccharide ligase activity. Residues Cys-4527 and Cys-4530 each coordinate Zn(2+).

It belongs to the AAA ATPase family.

It localises to the cytoplasm. Its subcellular location is the cytosol. The protein localises to the lipid droplet. It carries out the reaction S-ubiquitinyl-[E2 ubiquitin-conjugating enzyme]-L-cysteine + [acceptor protein]-L-lysine = [E2 ubiquitin-conjugating enzyme]-L-cysteine + N(6)-ubiquitinyl-[acceptor protein]-L-lysine.. It catalyses the reaction ATP + H2O = ADP + phosphate + H(+). It functions in the pathway protein modification; protein ubiquitination. Atypical E3 ubiquitin ligase that can catalyze ubiquitination of both proteins and lipids, and which is involved in various processes, such as lipid metabolism, angiogenesis and cell-autonomous immunity. Acts as a key immune sensor by catalyzing ubiquitination of the lipid A moiety of bacterial lipopolysaccharide (LPS) via its RZ-type zinc-finger: restricts the proliferation of cytosolic bacteria, such as Salmonella, by generating the bacterial ubiquitin coat through the ubiquitination of LPS. Ubiquitination of LPS triggers cell-autonomous immunity, such as antibacterial autophagy, leading to degradation of the microbial invader. Involved in lipid metabolism by regulating fat storage and lipid droplet formation; act by inhibiting the lipolytic process. Also regulates lipotoxicity by inhibiting desaturation of fatty acids. Also acts as an E3 ubiquitin-protein ligase via its RING-type zinc finger. Involved in the non-canonical Wnt signaling pathway in vascular development: acts by mediating ubiquitination and degradation of proteins downstream of rspo3, leading to inhibit the non-canonical Wnt signaling pathway and promoting vessel regression. Also has ATPase activity; ATPase activity is required for ubiquitination of LPS. Also involved in neuromuscular regulation. This chain is E3 ubiquitin-protein ligase rnf213-alpha, found in Danio rerio (Zebrafish).